The chain runs to 179 residues: Transcription factor E (179 aa).

The HTH TFE/IIEalpha-type domain occupies 1–102 (MAKKKVKYTF…YWRFDSRKAA (102 aa)).

Belongs to the TFE family. As to quaternary structure, monomer. Interaction with RNA polymerase subunits RpoF and RpoE is necessary for Tfe stimulatory transcription activity. Able to interact with Tbp and RNA polymerase in the absence of DNA promoter. Interacts both with the preinitiation and elongation complexes.

Its function is as follows. Transcription factor that plays a role in the activation of archaeal genes transcribed by RNA polymerase. Facilitates transcription initiation by enhancing TATA-box recognition by TATA-box-binding protein (Tbp), and transcription factor B (Tfb) and RNA polymerase recruitment. Not absolutely required for transcription in vitro, but particularly important in cases where Tbp or Tfb function is not optimal. It dynamically alters the nucleic acid-binding properties of RNA polymerases by stabilizing the initiation complex and destabilizing elongation complexes. Seems to translocate with the RNA polymerase following initiation and acts by binding to the non template strand of the transcription bubble in elongation complexes. The polypeptide is Transcription factor E (Methanosphaera stadtmanae (strain ATCC 43021 / DSM 3091 / JCM 11832 / MCB-3)).